Here is a 199-residue protein sequence, read N- to C-terminus: MTTLTVQQIACVYAWLAQLFSRELDDEQLTQIASAQMAEWFSLLKSEPPLTAAVNGLENSIATLTVRDDARLELAADFCGLFLMTDKQAALPYASAYKQDEQEIKRLLVEAGMETSGNFNEPADHLAIYLELLSHLHFSLGEGTVPARRIDGLRQKTLTALREWLPEFAARCRQYDSFGFYAALSQLLLVLVECDYQKR.

It belongs to the TorD/DmsD family. TorD subfamily.

Its subcellular location is the cytoplasm. Functionally, involved in the biogenesis of TorA. Acts on TorA before the insertion of the molybdenum cofactor and, as a result, probably favors a conformation of the apoenzyme that is competent for acquiring the cofactor. This chain is Chaperone protein TorD, found in Escherichia coli O45:K1 (strain S88 / ExPEC).